Consider the following 242-residue polypeptide: Probable transcriptional regulatory protein Dred_1658 (242 aa).

It belongs to the TACO1 family.

It localises to the cytoplasm. The chain is Probable transcriptional regulatory protein Dred_1658 from Desulforamulus reducens (strain ATCC BAA-1160 / DSM 100696 / MI-1) (Desulfotomaculum reducens).